A 293-amino-acid chain; its full sequence is Undecaprenyl-diphosphatase (293 aa).

Transmembrane regions (helical) follow at residues 107–127, 134–154, 207–227, 243–263, and 268–288; these read WMII…KDLI, MWIT…AEKV, FSFL…LPDA, IGTL…MKFV, and FSWF…LLWL.

Belongs to the UppP family.

Its subcellular location is the cell membrane. It catalyses the reaction di-trans,octa-cis-undecaprenyl diphosphate + H2O = di-trans,octa-cis-undecaprenyl phosphate + phosphate + H(+). Catalyzes the dephosphorylation of undecaprenyl diphosphate (UPP). Confers resistance to bacitracin. In Corynebacterium efficiens (strain DSM 44549 / YS-314 / AJ 12310 / JCM 11189 / NBRC 100395), this protein is Undecaprenyl-diphosphatase.